The following is a 623-amino-acid chain: Leucine aminopeptidase 2 (623 aa).

A peptide-binding positions include Gln-140 to Glu-142 and Pro-266 to Glu-271. Residue His-295 participates in Zn(2+) binding. The Proton acceptor role is filled by Glu-296. Zn(2+) is bound by residues His-299 and Glu-318. The Proton donor role is filled by Tyr-382.

The protein belongs to the peptidase M1 family. It depends on Zn(2+) as a cofactor.

The protein localises to the cytoplasm. The protein resides in the nucleus. It catalyses the reaction an epoxide + H2O = an ethanediol. Its function is as follows. Aminopeptidase that preferentially cleaves di- and tripeptides. Also has low epoxide hydrolase activity (in vitro). Can hydrolyze the epoxide leukotriene LTA(4) but it forms preferentially 5,6-dihydroxy-7,9,11,14-eicosatetraenoic acid rather than the cytokine leukotriene B(4) as the product compared to the homologous mammalian enzyme (in vitro). The sequence is that of Leucine aminopeptidase 2 from Eremothecium gossypii (strain ATCC 10895 / CBS 109.51 / FGSC 9923 / NRRL Y-1056) (Yeast).